Here is a 134-residue protein sequence, read N- to C-terminus: Small ribosomal subunit protein uS11 (134 aa).

This sequence belongs to the universal ribosomal protein uS11 family. In terms of assembly, part of the 30S ribosomal subunit. Interacts with proteins S7 and S18. Binds to IF-3.

In terms of biological role, located on the platform of the 30S subunit, it bridges several disparate RNA helices of the 16S rRNA. Forms part of the Shine-Dalgarno cleft in the 70S ribosome. The sequence is that of Small ribosomal subunit protein uS11 from Frankia casuarinae (strain DSM 45818 / CECT 9043 / HFP020203 / CcI3).